The primary structure comprises 264 residues: Expansin-B3 (264 aa).

An N-terminal signal peptide occupies residues 1 to 25 (MQLFPVMLATLCIVLQLLIGSSALA). An Expansin-like EG45 domain is found at 54-162 (GGACGYGTLV…RRTACKYRGK (109 aa)). 3 disulfides stabilise this stretch: Cys-57–Cys-86, Cys-89–Cys-157, and Cys-94–Cys-100. The 82-residue stretch at 175-256 (FWLSLLVEFE…NWAPKATYSS (82 aa)) folds into the Expansin-like CBD domain.

It belongs to the expansin family. Expansin B subfamily.

The protein resides in the secreted. It localises to the cell wall. Its subcellular location is the membrane. May cause loosening and extension of plant cell walls by disrupting non-covalent bonding between cellulose microfibrils and matrix glucans. No enzymatic activity has been found. This Arabidopsis thaliana (Mouse-ear cress) protein is Expansin-B3 (EXPB3).